Consider the following 503-residue polypeptide: Asparagine--tRNA ligase (503 aa).

This sequence belongs to the class-II aminoacyl-tRNA synthetase family. In terms of assembly, homodimer.

It localises to the cytoplasm. The catalysed reaction is tRNA(Asn) + L-asparagine + ATP = L-asparaginyl-tRNA(Asn) + AMP + diphosphate + H(+). This is Asparagine--tRNA ligase from Aster yellows witches'-broom phytoplasma (strain AYWB).